Reading from the N-terminus, the 2079-residue chain is von Willebrand factor A domain-containing protein DDB_G0286969 (2079 aa).

The VIT domain maps to 11 to 147 (EQILPSFISI…ELEIIITYST (137 aa)). Positions 178 to 203 (NENSTTNTNTQTQPQSVNTTTTTTPS) are disordered. Residues 180–203 (NSTTNTNTQTQPQSVNTTTTTTPS) are compositionally biased toward low complexity. The VWFA domain maps to 354–525 (ELIFLVDVSE…KVMRQLKRAL (172 aa)). Disordered stretches follow at residues 761-800 (PTTL…LKTP), 832-866 (PFVP…TEVK), 956-1139 (AKPV…TKPT), 1155-1203 (NEPA…VSST), and 1239-1294 (DSNT…ADAE). 3 stretches are compositionally biased toward low complexity: residues 785 to 800 (TTQQ…LKTP), 841 to 866 (PTTT…TEVK), and 956 to 973 (AKPV…QQTK). Residues 923 to 957 (EMIKIAEAKAAAEQKAAAEQKAIADAKAAAEQAAK) adopt a coiled-coil conformation. The segment covering 974–989 (PKADKQSKQNAKDNKQ) has biased composition (basic and acidic residues). Residues 992–1006 (KPVVVEQKPPVVTET) are compositionally biased toward low complexity. Residues 1007–1021 (KPTVATESATPTKPT) are compositionally biased toward polar residues. The segment covering 1023-1061 (AQAAAAAAAAAQQAAQQAAATTPVKQQPTKQTTPNKSTP) has biased composition (low complexity). The segment covering 1092–1111 (KPVETKPVEQTKPVETKPVE) has biased composition (basic and acidic residues). Residues 1176 to 1198 (NNNNNNNNNNNNNNNNNNNNNNN) are compositionally biased toward low complexity. Over residues 1239–1272 (DSNTKAPDSLKTTPIFSNGPQGISPSSGNGSNKS) the composition is skewed to polar residues. The segment covering 1280–1292 (DRGGRGGRDRNAD) has biased composition (basic and acidic residues). The region spanning 1317–1527 (LKKFKFNLNR…LDLIDLRANK (211 aa)) is the MIF4G domain. The disordered stretch occupies residues 1530–1755 (PKNSTQTKTK…PAPVEPVKPK (226 aa)). Composition is skewed to basic and acidic residues over residues 1538 to 1550 (TKKD…ERFI), 1557 to 1599 (QKRE…RDAP), and 1621 to 1634 (NNRD…DRSG). 2 stretches are compositionally biased toward low complexity: residues 1635-1659 (GKQS…LFGS) and 1688-1699 (SSSIPSIPNRSN). Positions 1725–1740 (SNDRDSRGPSKPDNRK) are enriched in basic and acidic residues. The region spanning 1760–1882 (KIEDDISMTL…PLNYLEEAYA (123 aa)) is the MI domain.

This chain is von Willebrand factor A domain-containing protein DDB_G0286969, found in Dictyostelium discoideum (Social amoeba).